We begin with the raw amino-acid sequence, 120 residues long: Large ribosomal subunit protein uL18 (120 aa).

It belongs to the universal ribosomal protein uL18 family. In terms of assembly, part of the 50S ribosomal subunit; part of the 5S rRNA/L5/L18/L25 subcomplex. Contacts the 5S and 23S rRNAs.

Functionally, this is one of the proteins that bind and probably mediate the attachment of the 5S RNA into the large ribosomal subunit, where it forms part of the central protuberance. The sequence is that of Large ribosomal subunit protein uL18 from Treponema denticola (strain ATCC 35405 / DSM 14222 / CIP 103919 / JCM 8153 / KCTC 15104).